The chain runs to 92 residues: Cell division topological specificity factor (92 aa).

This sequence belongs to the MinE family.

Functionally, prevents the cell division inhibition by proteins MinC and MinD at internal division sites while permitting inhibition at polar sites. This ensures cell division at the proper site by restricting the formation of a division septum at the midpoint of the long axis of the cell. The chain is Cell division topological specificity factor from Desulforamulus reducens (strain ATCC BAA-1160 / DSM 100696 / MI-1) (Desulfotomaculum reducens).